The primary structure comprises 288 residues: Energy-coupling factor transporter ATP-binding protein EcfA2 (288 aa).

Residues 3-246 enclose the ABC transporter domain; sequence IKLEQLGYCY…PDELVDLGLS (244 aa). 40 to 47 provides a ligand contact to ATP; sequence GHTGSGKS.

The protein belongs to the ABC transporter superfamily. Energy-coupling factor EcfA family. In terms of assembly, forms a stable energy-coupling factor (ECF) transporter complex composed of 2 membrane-embedded substrate-binding proteins (S component), 2 ATP-binding proteins (A component) and 2 transmembrane proteins (T component).

Its subcellular location is the cell membrane. In terms of biological role, ATP-binding (A) component of a common energy-coupling factor (ECF) ABC-transporter complex. Unlike classic ABC transporters this ECF transporter provides the energy necessary to transport a number of different substrates. The chain is Energy-coupling factor transporter ATP-binding protein EcfA2 from Listeria monocytogenes serotype 4b (strain F2365).